Reading from the N-terminus, the 161-residue chain is Allophycocyanin alpha chain (161 aa).

At Asn71 the chain carries N4-methylasparagine. Cys81 contributes to the (2R,3E)-phycocyanobilin binding site.

This sequence belongs to the phycobiliprotein family. As to quaternary structure, heterodimer of an alpha and a beta chain. In terms of processing, contains one covalently linked phycocyanobilin chromophore.

It is found in the cellular thylakoid membrane. Light-harvesting photosynthetic bile pigment-protein from the phycobiliprotein complex. Allophycocyanin has a maximum absorption at approximately 650 nanometers. The sequence is that of Allophycocyanin alpha chain (apcA) from Synechocystis sp. (strain PCC 6714) (Aphanocapsa sp. (strain PCC 6714)).